The primary structure comprises 310 residues: Protoheme IX farnesyltransferase 2 (310 aa).

The next 9 helical transmembrane spans lie at proline 25–glycine 45, leucine 49–isoleucine 69, histidine 98–threonine 118, leucine 121–methionine 141, serine 145–cysteine 165, valine 176–phenylalanine 196, isoleucine 222–threonine 242, alanine 245–tyrosine 265, and glutamine 277–phenylalanine 297.

It belongs to the UbiA prenyltransferase family. Protoheme IX farnesyltransferase subfamily.

It is found in the cell inner membrane. The catalysed reaction is heme b + (2E,6E)-farnesyl diphosphate + H2O = Fe(II)-heme o + diphosphate. It functions in the pathway porphyrin-containing compound metabolism; heme O biosynthesis; heme O from protoheme: step 1/1. Converts heme B (protoheme IX) to heme O by substitution of the vinyl group on carbon 2 of heme B porphyrin ring with a hydroxyethyl farnesyl side group. The sequence is that of Protoheme IX farnesyltransferase 2 from Shewanella sp. (strain MR-4).